A 235-amino-acid chain; its full sequence is Orotidine 5'-phosphate decarboxylase (235 aa).

Substrate contacts are provided by residues aspartate 17, lysine 39, 66–75 (DLKLHDIGNT), threonine 121, arginine 182, glutamine 191, glycine 211, and arginine 212. Lysine 68 serves as the catalytic Proton donor.

This sequence belongs to the OMP decarboxylase family. Type 1 subfamily. In terms of assembly, homodimer.

It catalyses the reaction orotidine 5'-phosphate + H(+) = UMP + CO2. It functions in the pathway pyrimidine metabolism; UMP biosynthesis via de novo pathway; UMP from orotate: step 2/2. Functionally, catalyzes the decarboxylation of orotidine 5'-monophosphate (OMP) to uridine 5'-monophosphate (UMP). The protein is Orotidine 5'-phosphate decarboxylase of Rhodopseudomonas palustris (strain HaA2).